Consider the following 395-residue polypeptide: Chaperone protein DnaJ 2 (395 aa).

The J domain maps to 10 to 75 (DYYADLGVSK…TKRREYDDLK (66 aa)). A CR-type zinc finger spans residues 165–242 (GTTIPVELTG…CRGRGTVRRT (78 aa)). Zn(2+) is bound by residues cysteine 178, cysteine 181, cysteine 194, cysteine 197, cysteine 216, cysteine 219, cysteine 230, and cysteine 233. CXXCXGXG motif repeat units follow at residues 178-185 (CNTCHGSG), 194-201 (CGQCNGSG), 216-223 (CTNCGGTG), and 230-237 (CVDCRGRG).

Belongs to the DnaJ family. As to quaternary structure, homodimer. The cofactor is Zn(2+).

The protein resides in the cytoplasm. In terms of biological role, participates actively in the response to hyperosmotic and heat shock by preventing the aggregation of stress-denatured proteins and by disaggregating proteins, also in an autonomous, DnaK-independent fashion. Unfolded proteins bind initially to DnaJ; upon interaction with the DnaJ-bound protein, DnaK hydrolyzes its bound ATP, resulting in the formation of a stable complex. GrpE releases ADP from DnaK; ATP binding to DnaK triggers the release of the substrate protein, thus completing the reaction cycle. Several rounds of ATP-dependent interactions between DnaJ, DnaK and GrpE are required for fully efficient folding. Also involved, together with DnaK and GrpE, in the DNA replication of plasmids through activation of initiation proteins. This Corynebacterium efficiens (strain DSM 44549 / YS-314 / AJ 12310 / JCM 11189 / NBRC 100395) protein is Chaperone protein DnaJ 2.